Here is a 90-residue protein sequence, read N- to C-terminus: Small cysteine-rich outer membrane protein OmcA (90 aa).

Positions 1-19 (MKKAVLIAAMFCGVVSLSS) are cleaved as a signal peptide. The N-palmitoyl cysteine moiety is linked to residue C20. C20 carries the S-diacylglycerol cysteine lipid modification. Positions 69–90 (TECNSQSPQVKGCTSPDGRCKQ) are disordered.

As to quaternary structure, part of a disulfide cross-linked outer membrane complex (COMC) composed of the major outer membrane porin (MOMP), the small cysteine-rich protein (OmcA) and the large cysteine-rich periplasmic protein (OmcB).

It localises to the cell outer membrane. In terms of biological role, in elementary bodies (EBs, the infectious stage, which is able to survive outside the host cell) provides the structural integrity of the outer envelope through disulfide cross-links with the large cysteine-rich periplasmic protein and the major outer membrane porin. It has been described in publications as the Sarkosyl-insoluble COMC (Chlamydia outer membrane complex), and serves as the functional equivalent of peptidoglycan. This Chlamydia pneumoniae (Chlamydophila pneumoniae) protein is Small cysteine-rich outer membrane protein OmcA (omcA).